A 230-amino-acid polypeptide reads, in one-letter code: UPF0173 metal-dependent hydrolase RHOS4_08540 (230 aa).

This sequence belongs to the UPF0173 family.

The polypeptide is UPF0173 metal-dependent hydrolase RHOS4_08540 (Cereibacter sphaeroides (strain ATCC 17023 / DSM 158 / JCM 6121 / CCUG 31486 / LMG 2827 / NBRC 12203 / NCIMB 8253 / ATH 2.4.1.) (Rhodobacter sphaeroides)).